The primary structure comprises 935 residues: UvrABC system protein A (935 aa).

31–38 is a binding site for ATP; that stretch reads GLSGSGKS. The segment at 254–281 adopts a C4-type zinc-finger fold; sequence CFKCKMSFEELEPLSFSFNSPKGACESC. ABC transporter domains lie at 310-579 and 599-931; these read IFGY…NNHS and KEKH…KFLA. An ATP-binding site is contributed by 631–638; the sequence is GVSGSGKS. A C4-type zinc finger spans residues 731–757; sequence CEKCQGDGDIKIEMHFLPDVLVQCDSC.

Belongs to the ABC transporter superfamily. UvrA family. Forms a heterotetramer with UvrB during the search for lesions.

Its subcellular location is the cytoplasm. The UvrABC repair system catalyzes the recognition and processing of DNA lesions. UvrA is an ATPase and a DNA-binding protein. A damage recognition complex composed of 2 UvrA and 2 UvrB subunits scans DNA for abnormalities. When the presence of a lesion has been verified by UvrB, the UvrA molecules dissociate. This Helicobacter pylori (strain ATCC 700392 / 26695) (Campylobacter pylori) protein is UvrABC system protein A.